The chain runs to 547 residues: MKKVLVNQVGFLCNAPKKAVLNFQANEFSVVDGNGKKAFDGKVEHFGTDEISGEDTYVADFSALTEEGKYKIVADGQESVLFSISNDAYDKLMKDICKCFYYLRCGDALSKEFAGEYYHKPCHMTKATVYGEDVEPVDVTGGWHDAGDYGRYSTAGAVAVAHLLYGVRFFKGLLDVHYDIPKVAGDKGNLPEILAEVKVELDFLMKMQRENGSVWHKVTTFNHAPFLMPEDDREELFLFSVSSLATADIAAVFALAYTVYKEYDAEYADKLMQKSLLAYKWLLDNPDELLFFNPDGSNTGQYDEAEDISNRFWAACALYEATSDGKYYSDAQELKNRLEEFDKNAQKKGYQGNVFTCLGWAEVAGLGSLSLLLKREENALCSLARNSFVAEADRLVKVSKENGFGLCMGENDFIWGSNMELLKYMMVLSTAIRIDNKPEYKLALEAGLDYILGCNSMDISYVTGNGEKAFKNPHLRPTAVDDIEEPWPGLVSGGPNSGLHDERAQTLRGKGLPPMKCYIDHIDCYSLNEITIYWNSPLVFALSGILE.

Asp148 functions as the Nucleophile in the catalytic mechanism. Catalysis depends on residues His474, Asp520, and Glu529.

Belongs to the glycosyl hydrolase 9 (cellulase E) family.

It is found in the secreted. The catalysed reaction is Endohydrolysis of (1-&gt;4)-beta-D-glucosidic linkages in cellulose, lichenin and cereal beta-D-glucans.. Its activity is regulated as follows. Is not inhibited by methylcellulose. Functionally, glycoside hydrolase that rapidly hydrolyzes short-chain cellodextrins to yield either cellobiose or cellobiose and glucose as end products; cellobiose is not hydrolyzed further. Also shows limited activity against endoglucanase specific substrates (carboxymethylcellulose (CMC), lichenan, laminarin and xylan). This is Cellodextrinase from Butyrivibrio fibrisolvens.